A 402-amino-acid polypeptide reads, in one-letter code: Succinyl-diaminopimelate desuccinylase (402 aa).

Histidine 88 contacts Zn(2+). Aspartate 90 is an active-site residue. Zn(2+) is bound at residue aspartate 121. The Proton acceptor role is filled by glutamate 155. Positions 156, 184, and 374 each coordinate Zn(2+).

Belongs to the peptidase M20A family. DapE subfamily. Homodimer. Zn(2+) is required as a cofactor. Co(2+) serves as cofactor.

It carries out the reaction N-succinyl-(2S,6S)-2,6-diaminopimelate + H2O = (2S,6S)-2,6-diaminopimelate + succinate. It functions in the pathway amino-acid biosynthesis; L-lysine biosynthesis via DAP pathway; LL-2,6-diaminopimelate from (S)-tetrahydrodipicolinate (succinylase route): step 3/3. In terms of biological role, catalyzes the hydrolysis of N-succinyl-L,L-diaminopimelic acid (SDAP), forming succinate and LL-2,6-diaminopimelate (DAP), an intermediate involved in the bacterial biosynthesis of lysine and meso-diaminopimelic acid, an essential component of bacterial cell walls. This is Succinyl-diaminopimelate desuccinylase from Psychrobacter sp. (strain PRwf-1).